The primary structure comprises 482 residues: Cardiolipin synthase (482 aa).

2 helical membrane passes run 4-24 and 34-54; these read LAYL…VTVF and WAWL…YLIF. PLD phosphodiesterase domains lie at 217–244 and 395–422; these read LNYR…GDEY and DNGF…DFRS. Residues His222, Lys224, Asp229, His400, Lys402, and Asp407 contribute to the active site.

It belongs to the phospholipase D family. Cardiolipin synthase subfamily.

The protein localises to the cell membrane. The enzyme catalyses 2 a 1,2-diacyl-sn-glycero-3-phospho-(1'-sn-glycerol) = a cardiolipin + glycerol. Its function is as follows. Catalyzes the reversible phosphatidyl group transfer from one phosphatidylglycerol molecule to another to form cardiolipin (CL) (diphosphatidylglycerol) and glycerol. The sequence is that of Cardiolipin synthase (cls) from Listeria welshimeri serovar 6b (strain ATCC 35897 / DSM 20650 / CCUG 15529 / CIP 8149 / NCTC 11857 / SLCC 5334 / V8).